Here is a 480-residue protein sequence, read N- to C-terminus: Beta-amyrin 28-monooxygenase (480 aa).

The helical transmembrane segment at 3 to 23 (VFFLSLLLICVLSVSIRLYLL) threads the bilayer. Cysteine 427 is a heme binding site.

It belongs to the cytochrome P450 family. The cofactor is heme. Expressed in leaves, stems and fruit skin.

The protein localises to the membrane. The enzyme catalyses beta-amyrin + 3 reduced [NADPH--hemoprotein reductase] + 3 O2 = oleanolate + 3 oxidized [NADPH--hemoprotein reductase] + 4 H2O + 4 H(+). In terms of biological role, catalyzes the carboxylation of beta-amyrin at the C-28 position to form oleanolic acid. May be involved in saponin biosynthesis in fruit skin. The sequence is that of Beta-amyrin 28-monooxygenase from Vitis vinifera (Grape).